Consider the following 284-residue polypeptide: Tropomyosin (284 aa).

The disordered stretch occupies residues 1–54; that stretch reads MDAIKKKMQAMKLEKDNAMDRADTLEQQNKEANNRAEKTEEEIRATQKKMQQVE. Residues 1–273 adopt a coiled-coil conformation; it reads MDAIKKKMQA…KEKYKSITDE (273 aa). The span at 12–45 shows a compositional bias: basic and acidic residues; it reads KLEKDNAMDRADTLEQQNKEANNRAEKTEEEIRA.

Belongs to the tropomyosin family. Homodimer. As to expression, muscle (at protein level). Expressed in leg and chest protection muscle (at protein level). Expressed in claw muscle.

In terms of biological role, tropomyosin, in association with the troponin complex, plays a central role in the calcium dependent regulation of muscle contraction. The sequence is that of Tropomyosin from Eriocheir sinensis (Chinese mitten crab).